Reading from the N-terminus, the 669-residue chain is Probable L-type lectin-domain containing receptor kinase I.2 (669 aa).

Residues 1–24 (MAQRFYLLLLLLIFLVNLICFSSQ) form the signal peptide. Topologically, residues 25–295 (QDLSFVFNGF…FTEQKRKRSP (271 aa)) are extracellular. The interval 26-266 (DLSFVFNGFN…NQYILGWSFS (241 aa)) is legume-lectin like. Asn-132, Asn-189, Asn-212, and Asn-233 each carry an N-linked (GlcNAc...) asparagine glycan. The chain crosses the membrane as a helical span at residues 296 to 316 (LLIVLLVILTLVVIGGLGGYY). Residues 317–669 (LYRRKKYAEV…SHTILNGDGR (353 aa)) lie on the Cytoplasmic side of the membrane. A Protein kinase domain is found at 351–609 (FNKDGRLGKG…MQYINRDQAL (259 aa)). ATP contacts are provided by residues 357 to 365 (LGKGGFGEV) and Lys-379. The Proton acceptor role is filled by Asp-475.

The protein in the C-terminal section; belongs to the protein kinase superfamily. Ser/Thr protein kinase family. It in the N-terminal section; belongs to the leguminous lectin family.

The protein localises to the cell membrane. The catalysed reaction is L-seryl-[protein] + ATP = O-phospho-L-seryl-[protein] + ADP + H(+). The enzyme catalyses L-threonyl-[protein] + ATP = O-phospho-L-threonyl-[protein] + ADP + H(+). Involved in resistance response to the pathogenic fungus Alternaria brassicicola. The polypeptide is Probable L-type lectin-domain containing receptor kinase I.2 (Arabidopsis thaliana (Mouse-ear cress)).